Here is a 199-residue protein sequence, read N- to C-terminus: dITP/XTP pyrophosphatase (199 aa).

8–13 lines the substrate pocket; sequence TSNKNK. Mg(2+) contacts are provided by Glu40 and Asp68. The active-site Proton acceptor is the Asp68. Residues Ser69, 154–157, Lys177, and 182–183 contribute to the substrate site; these read FGYD and HR.

The protein belongs to the HAM1 NTPase family. As to quaternary structure, homodimer. Mg(2+) is required as a cofactor.

The enzyme catalyses XTP + H2O = XMP + diphosphate + H(+). It catalyses the reaction dITP + H2O = dIMP + diphosphate + H(+). It carries out the reaction ITP + H2O = IMP + diphosphate + H(+). In terms of biological role, pyrophosphatase that catalyzes the hydrolysis of nucleoside triphosphates to their monophosphate derivatives, with a high preference for the non-canonical purine nucleotides XTP (xanthosine triphosphate), dITP (deoxyinosine triphosphate) and ITP. Seems to function as a house-cleaning enzyme that removes non-canonical purine nucleotides from the nucleotide pool, thus preventing their incorporation into DNA/RNA and avoiding chromosomal lesions. The sequence is that of dITP/XTP pyrophosphatase from Wigglesworthia glossinidia brevipalpis.